Consider the following 225-residue polypeptide: Glutathione S-transferase Mu 3 (225 aa).

Residues 5–92 form the GST N-terminal domain; sequence SSMVLGYWDI…YIARKHNMCG (88 aa). Glutathione-binding positions include 11–12, 50–54, and 63–64; these read YW, WLDVK, and NL. A Glycyl lysine isopeptide (Lys-Gly) (interchain with G-Cter in SUMO2) cross-link involves residue Lys-54. Lys-73 is covalently cross-linked (Glycyl lysine isopeptide (Lys-Gly) (interchain with G-Cter in SUMO2)). 76–77 lines the glutathione pocket; the sequence is QS. A GST C-terminal domain is found at 94–212; the sequence is TEEEKIRVDI…QSDQFFKMPI (119 aa). Tyr-120 is a substrate binding site.

The protein belongs to the GST superfamily. Mu family. In terms of assembly, homodimer.

It localises to the cytoplasm. The enzyme catalyses RX + glutathione = an S-substituted glutathione + a halide anion + H(+). Its function is as follows. Conjugation of reduced glutathione to a wide number of exogenous and endogenous hydrophobic electrophiles. May govern uptake and detoxification of both endogenous compounds and xenobiotics at the testis and brain blood barriers. The chain is Glutathione S-transferase Mu 3 (GSTM3) from Macaca fuscata fuscata (Japanese macaque).